The following is a 382-amino-acid chain: Dual-specificity RNA methyltransferase RlmN (382 aa).

Catalysis depends on glutamate 95, which acts as the Proton acceptor. One can recognise a Radical SAM core domain in the interval 101–348 (EDDRGTLCIS…TTVRKTRGDD (248 aa)). Cysteine 108 and cysteine 353 are disulfide-bonded. Residues cysteine 115, cysteine 119, and cysteine 122 each contribute to the [4Fe-4S] cluster site. S-adenosyl-L-methionine-binding positions include 179–180 (GE), serine 211, 233–235 (SLH), and asparagine 310. Cysteine 353 serves as the catalytic S-methylcysteine intermediate.

The protein belongs to the radical SAM superfamily. RlmN family. [4Fe-4S] cluster is required as a cofactor.

The protein resides in the cytoplasm. It carries out the reaction adenosine(2503) in 23S rRNA + 2 reduced [2Fe-2S]-[ferredoxin] + 2 S-adenosyl-L-methionine = 2-methyladenosine(2503) in 23S rRNA + 5'-deoxyadenosine + L-methionine + 2 oxidized [2Fe-2S]-[ferredoxin] + S-adenosyl-L-homocysteine. The catalysed reaction is adenosine(37) in tRNA + 2 reduced [2Fe-2S]-[ferredoxin] + 2 S-adenosyl-L-methionine = 2-methyladenosine(37) in tRNA + 5'-deoxyadenosine + L-methionine + 2 oxidized [2Fe-2S]-[ferredoxin] + S-adenosyl-L-homocysteine. Its function is as follows. Specifically methylates position 2 of adenine 2503 in 23S rRNA and position 2 of adenine 37 in tRNAs. m2A2503 modification seems to play a crucial role in the proofreading step occurring at the peptidyl transferase center and thus would serve to optimize ribosomal fidelity. This is Dual-specificity RNA methyltransferase RlmN from Bordetella parapertussis (strain 12822 / ATCC BAA-587 / NCTC 13253).